Consider the following 119-residue polypeptide: Protein TusC (119 aa).

It belongs to the DsrF/TusC family. As to quaternary structure, heterohexamer, formed by a dimer of trimers. The hexameric TusBCD complex contains 2 copies each of TusB, TusC and TusD. The TusBCD complex interacts with TusE.

The protein resides in the cytoplasm. In terms of biological role, part of a sulfur-relay system required for 2-thiolation of 5-methylaminomethyl-2-thiouridine (mnm(5)s(2)U) at tRNA wobble positions. This Escherichia fergusonii (strain ATCC 35469 / DSM 13698 / CCUG 18766 / IAM 14443 / JCM 21226 / LMG 7866 / NBRC 102419 / NCTC 12128 / CDC 0568-73) protein is Protein TusC.